A 210-amino-acid polypeptide reads, in one-letter code: uncharacterized protein (210 aa).

In terms of domain architecture, CS spans 2–91 (SRHPEVKWAQ…AEAKWWKKLV (90 aa)). A disordered region spans residues 165–210 (GMGGMGGMDEFEDESDDEEEVSKPQDAEKAAEAGKSQESDAKTETS). Residues 173–184 (DEFEDESDDEEE) show a composition bias toward acidic residues. The span at 185 to 210 (VSKPQDAEKAAEAGKSQESDAKTETS) shows a compositional bias: basic and acidic residues.

This is an uncharacterized protein from Oryza sativa subsp. indica (Rice).